Consider the following 44-residue polypeptide: Photosystem I reaction center subunit IX (44 aa).

The helical transmembrane segment at 7-27 (YLSVAPVLSTLWFGALAGLLI) threads the bilayer.

The protein belongs to the PsaJ family.

The protein resides in the plastid. It localises to the chloroplast thylakoid membrane. Functionally, may help in the organization of the PsaE and PsaF subunits. This Coffea arabica (Arabian coffee) protein is Photosystem I reaction center subunit IX.